Reading from the N-terminus, the 114-residue chain is uncharacterized protein (114 aa).

In terms of biological role, may be associated with transposition functions of transposon Tn903. This is an uncharacterized protein from Escherichia coli.